A 131-amino-acid polypeptide reads, in one-letter code: Phosphoribosyl-ATP pyrophosphatase 2 (131 aa).

The tract at residues 105–131 (RIGKPAAPHATRRPVIPQEARAVRKHR) is disordered.

The protein belongs to the PRA-PH family.

Its subcellular location is the cytoplasm. It catalyses the reaction 1-(5-phospho-beta-D-ribosyl)-ATP + H2O = 1-(5-phospho-beta-D-ribosyl)-5'-AMP + diphosphate + H(+). It participates in amino-acid biosynthesis; L-histidine biosynthesis; L-histidine from 5-phospho-alpha-D-ribose 1-diphosphate: step 2/9. In Rhodopseudomonas palustris (strain ATCC BAA-98 / CGA009), this protein is Phosphoribosyl-ATP pyrophosphatase 2 (hisE2).